The chain runs to 189 residues: NADH-ubiquinone oxidoreductase 20.9 kDa subunit (189 aa).

Residues 73–88 (AMRLATAVGFFGGFLY) form a helical membrane-spanning segment.

As to quaternary structure, complex I is composed of about 40 different subunits. The N-terminus is blocked.

Its subcellular location is the mitochondrion inner membrane. The catalysed reaction is a ubiquinone + NADH + 5 H(+)(in) = a ubiquinol + NAD(+) + 4 H(+)(out). Transfer of electrons from NADH to the respiratory chain. The immediate electron acceptor for the enzyme is believed to be ubiquinone. This chain is NADH-ubiquinone oxidoreductase 20.9 kDa subunit (nuo20.9), found in Neurospora crassa (strain ATCC 24698 / 74-OR23-1A / CBS 708.71 / DSM 1257 / FGSC 987).